The sequence spans 282 residues: MTGESGAAAAPSITLNDEHTMPVLGLGVAELSDDETERAVSAALEIGCRLIDTAYAYGNEAAVGRAIAASGVAREELFVTTKLATPDQGFTRSQEACRASLDRLGLDYVDLYLIHWPAPPVGKYVDAWGGMIQSRGEGHARSIGVSNFTAEHIENLIDLTFVTPAVNQIELHPLLNQDELRKANAQHTVVTQSYCPLALGRLLDNPTVTSIASEYVKTPAQVLLRWNLQLGNAVVVRSARPERIASNFDVFDFELAAEHMDALGGLNDGTRVREDPLTYAGT.

The active-site Proton donor is the Y57. NADPH-binding residues include L197, V235, R237, S238, A239, R243, S246, N247, and R273.

The protein belongs to the aldo/keto reductase family.

The chain is Aldo-keto reductase BQ2027_MB2996 from Mycobacterium bovis (strain ATCC BAA-935 / AF2122/97).